The primary structure comprises 319 residues: RWD domain-containing protein 2B (319 aa).

The RWD domain maps to alanine 41–tyrosine 165. Serine 275 carries the phosphoserine modification.

Ubiquitous.

The sequence is that of RWD domain-containing protein 2B (RWDD2B) from Homo sapiens (Human).